A 128-amino-acid polypeptide reads, in one-letter code: MAVRAFPGGHMREILTPPIVFKCLADDTRARMTLLIAREGELCVCELTHALELSQPKISRHLAQLREAGILMDRRKGQWVYYRLHPEVPQWVDAMLKGVVDANQEWLSPDALRLAEMGERPQSPVACA.

The HTH arsR-type domain maps to 11–103 (MREILTPPIV…AMLKGVVDAN (93 aa)). C43 and C45 together coordinate arsenite. Positions 44 to 67 (VCELTHALELSQPKISRHLAQLRE) form a DNA-binding region, H-T-H motif.

Homodimer.

Its subcellular location is the cytoplasm. Its function is as follows. Binds arsenite and regulates the expression of arsenic efflux pumps. In vitro, also binds antimony and bismuth, but not arsenate. The sequence is that of Arsenic resistance transcriptional regulator ArsR1 from Pseudomonas putida (strain ATCC 47054 / DSM 6125 / CFBP 8728 / NCIMB 11950 / KT2440).